We begin with the raw amino-acid sequence, 509 residues long: Maturase K (509 aa).

Belongs to the intron maturase 2 family. MatK subfamily.

It localises to the plastid. The protein resides in the chloroplast. Functionally, usually encoded in the trnK tRNA gene intron. Probably assists in splicing its own and other chloroplast group II introns. The sequence is that of Maturase K from Clematis florida (Asian virgin's bower).